The chain runs to 1433 residues: Pleckstrin homology domain-containing family H member 1 (1433 aa).

Residues 40 to 174 are a coiled coil; it reads NIRHLLAERM…QILMLQDKLQ (135 aa). Disordered stretches follow at residues 247–346 and 552–634; these read DKAD…LSPP and SSVP…TSSY. Over residues 252-266 the composition is skewed to polar residues; the sequence is PKSSQDGVDATSTVK. Positions 279–299 are enriched in basic and acidic residues; it reads MRDRAMGGASDRDHSSDELNS. Positions 308–318 are enriched in low complexity; the sequence is SSSSSSSSSSS. Residues 332–343 show a composition bias toward pro residues; that stretch reads TPTPKSPPPVSL. The segment covering 557 to 567 has biased composition (acidic residues); it reads PDDDSGSEDDS. Positions 568–578 are enriched in low complexity; sequence SSLASLHTSTL. A compositionally biased stretch (polar residues) spans 597-606; sequence VSTSSISSES. PH domains are found at residues 643 to 737 and 751 to 859; these read TLEK…NVLK and KPTA…VAAG. A MyTH4 domain is found at 896–1050; that stretch reads FSKEGLRYPL…PSRMEILSIL (155 aa). An FERM domain is found at 1061-1392; that stretch reads FSIPVHFMNN…SYINYWTSSL (332 aa).

Critical component of the guidance pathway underlying endothelial cell migration and blood vessel patterning. Involved in mediating membrane localization of ephrin proteins, which have been shown to provide guidance cues for endothelial cell migration. This Danio rerio (Zebrafish) protein is Pleckstrin homology domain-containing family H member 1 (plekhh1).